The following is a 291-amino-acid chain: 4-diphosphocytidyl-2-C-methyl-D-erythritol kinase (291 aa).

Residue K11 is part of the active site. An ATP-binding site is contributed by P97–S107. D139 is a catalytic residue.

Belongs to the GHMP kinase family. IspE subfamily.

The enzyme catalyses 4-CDP-2-C-methyl-D-erythritol + ATP = 4-CDP-2-C-methyl-D-erythritol 2-phosphate + ADP + H(+). It functions in the pathway isoprenoid biosynthesis; isopentenyl diphosphate biosynthesis via DXP pathway; isopentenyl diphosphate from 1-deoxy-D-xylulose 5-phosphate: step 3/6. Catalyzes the phosphorylation of the position 2 hydroxy group of 4-diphosphocytidyl-2C-methyl-D-erythritol. The protein is 4-diphosphocytidyl-2-C-methyl-D-erythritol kinase of Methylorubrum extorquens (strain CM4 / NCIMB 13688) (Methylobacterium extorquens).